A 199-amino-acid chain; its full sequence is dITP/XTP pyrophosphatase (199 aa).

Residue 7 to 12 (TGNAGK) participates in substrate binding. The Proton acceptor role is filled by aspartate 68. Aspartate 68 lines the Mg(2+) pocket. Substrate-binding positions include serine 69, 153–156 (FGYD), lysine 176, and 181–182 (HR).

Belongs to the HAM1 NTPase family. As to quaternary structure, homodimer. Mg(2+) is required as a cofactor.

It catalyses the reaction XTP + H2O = XMP + diphosphate + H(+). The catalysed reaction is dITP + H2O = dIMP + diphosphate + H(+). The enzyme catalyses ITP + H2O = IMP + diphosphate + H(+). Its function is as follows. Pyrophosphatase that catalyzes the hydrolysis of nucleoside triphosphates to their monophosphate derivatives, with a high preference for the non-canonical purine nucleotides XTP (xanthosine triphosphate), dITP (deoxyinosine triphosphate) and ITP. Seems to function as a house-cleaning enzyme that removes non-canonical purine nucleotides from the nucleotide pool, thus preventing their incorporation into DNA/RNA and avoiding chromosomal lesions. This Halorhodospira halophila (strain DSM 244 / SL1) (Ectothiorhodospira halophila (strain DSM 244 / SL1)) protein is dITP/XTP pyrophosphatase.